Reading from the N-terminus, the 109-residue chain is ATP-dependent Clp protease adapter protein ClpS (109 aa).

The disordered stretch occupies residues 1–21 (MAERKQGGQNNGAGSSVITEV).

This sequence belongs to the ClpS family. In terms of assembly, binds to the N-terminal domain of the chaperone ClpA.

Its function is as follows. Involved in the modulation of the specificity of the ClpAP-mediated ATP-dependent protein degradation. This chain is ATP-dependent Clp protease adapter protein ClpS, found in Caulobacter sp. (strain K31).